The chain runs to 328 residues: Sulfate adenylyltransferase subunit 2 (328 aa).

The disordered stretch occupies residues 305–328 (ERQGRVIDRDSTGSMERKKAEGYF).

Belongs to the PAPS reductase family. CysD subfamily. In terms of assembly, heterodimer composed of CysD, the smaller subunit, and CysN.

The catalysed reaction is sulfate + ATP + H(+) = adenosine 5'-phosphosulfate + diphosphate. It functions in the pathway sulfur metabolism; hydrogen sulfide biosynthesis; sulfite from sulfate: step 1/3. Functionally, with CysN forms the ATP sulfurylase (ATPS) that catalyzes the adenylation of sulfate producing adenosine 5'-phosphosulfate (APS) and diphosphate, the first enzymatic step in sulfur assimilation pathway. APS synthesis involves the formation of a high-energy phosphoric-sulfuric acid anhydride bond driven by GTP hydrolysis by CysN coupled to ATP hydrolysis by CysD. This is Sulfate adenylyltransferase subunit 2 from Rhodopseudomonas palustris (strain BisB18).